We begin with the raw amino-acid sequence, 460 residues long: Cation efflux system protein CusC (460 aa).

Positions 1-17 (MSPCKLLPFCVALALTG) are cleaved as a signal peptide. A lipid anchor (N-palmitoyl cysteine) is attached at Cys18. Cys18 carries the S-diacylglycerol cysteine lipid modification.

The protein belongs to the outer membrane factor (OMF) (TC 1.B.17) family. In terms of assembly, homotrimer. Component of the cus efflux system composed of CusA, CusB, CusC and CusF.

Its subcellular location is the cell outer membrane. Its function is as follows. Forms pores that allow passive diffusion of cations across the outer membrane. Part of a cation efflux system that mediates resistance to copper and silver. The chain is Cation efflux system protein CusC (cusC) from Escherichia coli O157:H7.